The primary structure comprises 502 residues: MLLRSSGKLNVGTKKEDGESTAPTPRPKILRCKCHHHCPEDSVNNICSTDGYCFTMIEEDDSGMPVVTSGCLGLEGSDFQCRDTPIPHQRRSIECCTERNECNKDLHPTLPPLKDRDFVDGPIHHKALLISVTVCSLLLVLIILFCYFRYKRQEARPRYSIGLEQDETYIPPGESLRDLIEQSQSSGSGSGLPLLVQRTIAKQIQMVKQIGKGRYGEVWMGKWRGEKVAVKVFFTTEEASWFRETEIYQTVLMRHENILGFIAADIKGTGSWTQLYLITDYHENGSLYDYLKSTTLDAKSMLKLAYSSVSGLCHLHTEIFSTQGKPAIAHRDLKSKNILVKKNGTCCIADLGLAVKFISDTNEVDIPPNTRVGTKRYMPPEVLDESLNRNHFQSYIMADMYSFGLILWEIARRCVSGGIVEEYQLPYHDLVPSDPSYEDMREIVCMKKLRPSFPNRWSSDECLRQMGKLMTECWAQNPASRLTALRVKKTLAKMSESQDIKL.

The signal sequence occupies residues 1-13 (MLLRSSGKLNVGT). Residues 1-24 (MLLRSSGKLNVGTKKEDGESTAPT) are disordered. Topologically, residues 14–126 (KKEDGESTAP…DFVDGPIHHK (113 aa)) are extracellular. 5 cysteine pairs are disulfide-bonded: cysteine 32–cysteine 53, cysteine 34–cysteine 38, cysteine 47–cysteine 71, cysteine 81–cysteine 95, and cysteine 96–cysteine 102. Residues 127-148 (ALLISVTVCSLLLVLIILFCYF) traverse the membrane as a helical segment. At 149–502 (RYKRQEARPR…KMSESQDIKL (354 aa)) the chain is on the cytoplasmic side. Residues 174–203 (ESLRDLIEQSQSSGSGSGLPLLVQRTIAKQ) enclose the GS domain. Positions 204–494 (IQMVKQIGKG…LRVKKTLAKM (291 aa)) constitute a Protein kinase domain. ATP-binding positions include 210-218 (IGKGRYGEV) and lysine 231. The active-site Proton acceptor is aspartate 332.

It belongs to the protein kinase superfamily. TKL Ser/Thr protein kinase family. TGFB receptor subfamily. As to quaternary structure, interacts with high affinity with GDF5; positively regulates chondrocyte differentiation. Interacts with SCUBE3. Interacts with TSC22D1/TSC-22. Interacts with TGFBR3. Requires Mg(2+) as cofactor. Mn(2+) is required as a cofactor. Autophosphorylated.

It localises to the cell membrane. It carries out the reaction L-threonyl-[receptor-protein] + ATP = O-phospho-L-threonyl-[receptor-protein] + ADP + H(+). The catalysed reaction is L-seryl-[receptor-protein] + ATP = O-phospho-L-seryl-[receptor-protein] + ADP + H(+). Functionally, on ligand binding, forms a receptor complex consisting of two type II and two type I transmembrane serine/threonine kinases. Type II receptors phosphorylate and activate type I receptors which autophosphorylate, then bind and activate SMAD transcriptional regulators. Receptor for BMP7/OP-1. Receptor for GDF5. Positively regulates chondrocyte differentiation through GDF5 interaction. In Mus musculus (Mouse), this protein is Bone morphogenetic protein receptor type-1B (Bmpr1b).